The primary structure comprises 251 residues: MRRVVRYLSVVVAITLMLTAESVSIATAAVPPLQPIPGVASVSPANGAVVGVAHPVVVTFTTPVTDRRAVERSIRISTPHNTTGHFEWVASNVVRWVPHRYWPPHTRVSVGVQELTEGFETGDALIGVASISAHTFTVSRNGEVLRTMPASLGKPSRPTPIGSFHAMSKERTVVMDSRTIGIPLNSSDGYLLTAHYAVRVTWSGVYVHSAPWSVNSQGYANVSHGCINLSPDNAAWYFDAVTVGDPIEVVG.

The N-terminal stretch at 1-28 (MRRVVRYLSVVVAITLMLTAESVSIATA) is a signal peptide. The region spanning 125–250 (LIGVASISAH…VTVGDPIEVV (126 aa)) is the L,D-TPase catalytic domain. Substrate contacts are provided by residues Tyr190 and 203-204 (SG). His208 functions as the Proton donor/acceptor in the catalytic mechanism. Residue Cys226 is the Nucleophile of the active site. Asn228 contributes to the substrate binding site.

In terms of assembly, monomer.

The protein resides in the periplasm. The protein operates within cell wall biogenesis; peptidoglycan biosynthesis. Its activity is regulated as follows. Is irreversibly inactivated by the beta-lactams carbapenems via the formation of a covalent adduct resulting from acylation of the catalytic Cys. In terms of biological role, generates 3-&gt;3 cross-links in peptidoglycan, catalyzing the cleavage of the mDap(3)-D-Ala(4) bond of a tetrapeptide donor stem and the formation of a bond between the carbonyl of mDap(3) of the donor stem and the side chain of mDap(3) of the acceptor stem. Is specific for donor substrates containing a stem tetrapeptide since it cannot use pentapeptide stems. The protein is L,D-transpeptidase 1 (ldtA) of Mycobacterium tuberculosis (strain CDC 1551 / Oshkosh).